Consider the following 224-residue polypeptide: Dimethyl sulfoxide reductase transcriptional activator (224 aa).

An HTH bat-type domain is found at 158–209; that stretch reads LTDKQREAAAAAVAKGYYATPRGADLSDLATALGISKSAVSQRLSAVESKLA.

Functionally, involved in activating dmsEABCD gene expression related to dimethyl sulfoxide (DMSO) reductase. Required for anaerobic respiration on dimethyl sulfoxide (DMSO) and trimethylamine N-oxide (TMAO). This chain is Dimethyl sulfoxide reductase transcriptional activator (dmsR), found in Halobacterium salinarum (strain ATCC 700922 / JCM 11081 / NRC-1) (Halobacterium halobium).